The primary structure comprises 495 residues: GTPase Der (495 aa).

EngA-type G domains lie at 3–166 (PVVA…VQDE) and 208–381 (IKLA…SCAT). GTP-binding positions include 9–16 (GRPNVGKS), 56–60 (DTGGI), 118–121 (NKTD), 214–221 (GRPNVGKS), 261–265 (DTAGV), and 326–329 (NKWD). The KH-like domain maps to 382–466 (RRVSTAMLTR…PIRIQFKEGE (85 aa)).

The protein belongs to the TRAFAC class TrmE-Era-EngA-EngB-Septin-like GTPase superfamily. EngA (Der) GTPase family. In terms of assembly, associates with the 50S ribosomal subunit.

GTPase that plays an essential role in the late steps of ribosome biogenesis. This chain is GTPase Der, found in Pectobacterium atrosepticum (strain SCRI 1043 / ATCC BAA-672) (Erwinia carotovora subsp. atroseptica).